The sequence spans 110 residues: U1-lycotoxin-Ls1kk (110 aa).

The first 20 residues, 1–20, serve as a signal peptide directing secretion; it reads MKFVLLFGVFLVTLFSYSSA. Positions 21–44 are excised as a propeptide; that stretch reads EMLDDFDQADEDELLSLIEKEEAR. Intrachain disulfides connect cysteine 47–cysteine 62, cysteine 54–cysteine 71, cysteine 61–cysteine 89, and cysteine 73–cysteine 87.

Belongs to the neurotoxin 19 (CSTX) family. 03 subfamily. In terms of tissue distribution, expressed by the venom gland.

It is found in the secreted. In Lycosa singoriensis (Wolf spider), this protein is U1-lycotoxin-Ls1kk.